A 918-amino-acid polypeptide reads, in one-letter code: Sarcosine dehydrogenase, mitochondrial (918 aa).

Positions 1–13 are enriched in low complexity; it reads MASLSRALRVAAA. Residues 1–22 constitute a mitochondrion transit peptide; sequence MASLSRALRVAAAHPRQSPTRG. The disordered stretch occupies residues 1–40; sequence MASLSRALRVAAAHPRQSPTRGMGPCNLSSAAGPTAEKSV. Lys38 is subject to N6-succinyllysine. Position 108 is a tele-8alpha-FAD histidine (His108). N6-acetyllysine; alternate is present on Lys173. At Lys173 the chain carries N6-succinyllysine; alternate. Residues Lys377 and Lys391 each carry the N6-succinyllysine modification. An N6-acetyllysine mark is found at Lys559 and Lys775. At Tyr777 the chain carries Phosphotyrosine. Lys802, Lys884, and Lys904 each carry N6-acetyllysine; alternate. An N6-succinyllysine; alternate mark is found at Lys802, Lys884, and Lys904.

The protein belongs to the GcvT family. FAD serves as cofactor. As to expression, expressed in pancreas, liver and kidney.

The protein resides in the mitochondrion matrix. It catalyses the reaction (6S)-5,6,7,8-tetrahydrofolyl-(gamma-L-Glu)(n) + sarcosine + oxidized [electron-transfer flavoprotein] + H(+) = (6R)-5,10-methylenetetrahydrofolyl-(gamma-L-Glu)(n) + reduced [electron-transfer flavoprotein] + glycine. It functions in the pathway amine and polyamine degradation; sarcosine degradation; formaldehyde and glycine from sarcosine: step 1/1. In terms of biological role, catalyzes the last step of the oxidative degradation of choline to glycine. Converts sarcosine into glycine. The protein is Sarcosine dehydrogenase, mitochondrial of Homo sapiens (Human).